We begin with the raw amino-acid sequence, 660 residues long: MKTVVFAYHDMGCLGIEALLAAGYEISAIFTHTDNPGEKAFYGSVARLAAERGIPVYAPDDVNHPLWVERIAQLSPDVIFSFYYRHLIHDKILQLAPAGAFNLHGSLLPKYRGRAPLNWVLVNGETETGVTLHRMVKRADAGAIVAQLRIAIAPDDIAITLHHKLCHAARQLLEQTLPAIKDGNILEIAQCENEATCFGRRTPEDSFLEWHKSAAVLHNMVRAVADPWPGAFSYVGNQKFTVWSSRVHSHAPAAQPGSVISVAPLLIACGDGALEIVTGQAGGGITMQGSQLAQTLGLVQGSRLNSQPACAARRRTRVLILGVNGFIGNHLTERLLREDHYEVYGLDIGSDAISRFLNHPHFHFVEGDISIHSEWIEYHVKKCDVVLPLVAIATPIEYTRNPLRVFELDFEENLRIIRYCVKYRKRIIFPSTSEVYGMCSDKYFDEDHSNLIVGPVNKPRWIYSVSKQLLDRVIWAYGEKEGLQFTLFRPFNWMGPRLDNLNAARIGSSRAITQLILNLVEGSPIKLIDGGKQKRCFTDIRDGIEALYRIIENAGNRCDGEIINIGNPENEASIEELGEMLLASFEKHPLRHYFPPFAGFRVVESSSYYGKGYQDVEHRKPSIRNARRCLDWEPKIDMQETIDETLDFFLRTVDLTDKPS.

The tract at residues 1–304 is formyltransferase ArnAFT; it reads MKTVVFAYHD…TLGLVQGSRL (304 aa). Residue 86-88 participates in (6R)-10-formyltetrahydrofolate binding; the sequence is HLI. Catalysis depends on histidine 104, which acts as the Proton donor; for formyltransferase activity. Residues arginine 114 and 136 to 140 each bind (6R)-10-formyltetrahydrofolate; that span reads VKRAD. A dehydrogenase ArnADH region spans residues 314-660; sequence RRTRVLILGV…RTVDLTDKPS (347 aa). Residues aspartate 347 and 368 to 369 each bind NAD(+); that span reads DI. UDP-alpha-D-glucuronate is bound by residues alanine 393, tyrosine 398, and 432–433; that span reads TS. Residue glutamate 434 is the Proton acceptor; for decarboxylase activity of the active site. UDP-alpha-D-glucuronate is bound by residues arginine 460, asparagine 492, 526 to 535, and tyrosine 613; that span reads KLIDGGKQKR. The active-site Proton donor; for decarboxylase activity is arginine 619.

The protein in the N-terminal section; belongs to the Fmt family. UDP-L-Ara4N formyltransferase subfamily. This sequence in the C-terminal section; belongs to the NAD(P)-dependent epimerase/dehydratase family. UDP-glucuronic acid decarboxylase subfamily. In terms of assembly, homohexamer, formed by a dimer of trimers.

It carries out the reaction UDP-alpha-D-glucuronate + NAD(+) = UDP-beta-L-threo-pentopyranos-4-ulose + CO2 + NADH. It catalyses the reaction UDP-4-amino-4-deoxy-beta-L-arabinose + (6R)-10-formyltetrahydrofolate = UDP-4-deoxy-4-formamido-beta-L-arabinose + (6S)-5,6,7,8-tetrahydrofolate + H(+). The protein operates within nucleotide-sugar biosynthesis; UDP-4-deoxy-4-formamido-beta-L-arabinose biosynthesis; UDP-4-deoxy-4-formamido-beta-L-arabinose from UDP-alpha-D-glucuronate: step 1/3. It participates in nucleotide-sugar biosynthesis; UDP-4-deoxy-4-formamido-beta-L-arabinose biosynthesis; UDP-4-deoxy-4-formamido-beta-L-arabinose from UDP-alpha-D-glucuronate: step 3/3. It functions in the pathway bacterial outer membrane biogenesis; lipopolysaccharide biosynthesis. In terms of biological role, bifunctional enzyme that catalyzes the oxidative decarboxylation of UDP-glucuronic acid (UDP-GlcUA) to UDP-4-keto-arabinose (UDP-Ara4O) and the addition of a formyl group to UDP-4-amino-4-deoxy-L-arabinose (UDP-L-Ara4N) to form UDP-L-4-formamido-arabinose (UDP-L-Ara4FN). The modified arabinose is attached to lipid A and is required for resistance to polymyxin and cationic antimicrobial peptides. The sequence is that of Bifunctional polymyxin resistance protein ArnA from Escherichia coli (strain SMS-3-5 / SECEC).